Reading from the N-terminus, the 93-residue chain is Protein IDA-LIKE 4 (93 aa).

An N-terminal signal peptide occupies residues 1–35 (MYPTRPHYWRRRLSINRPQAFLLLILCLFFIHHCD).

As to expression, expressed in mainly in buds. Lower levels in roots. Detected at the base of pedicel, in the floral and funicule abscission zones, in vascular tissues, in guard cells of young seedlings and in hydathodes.

It localises to the secreted. Its subcellular location is the extracellular space. In terms of biological role, may be involved in floral abscission. This is Protein IDA-LIKE 4 (IDL4) from Arabidopsis thaliana (Mouse-ear cress).